A 614-amino-acid polypeptide reads, in one-letter code: Vitamin B12 transporter BtuB (614 aa).

The signal sequence occupies residues 1–20 (MIKKASLLTACSVTAFSAWA). Positions 26–33 (DTLVVTAN) match the TonB box motif. The TBDR plug domain maps to 38 to 152 (PRSTVLAPTT…IGGVVNIITT (115 aa)). Cyanocob(III)alamin contacts are provided by residues Leu83, Ser85, Asn92, and 110-111 (VS). One can recognise a TBDR beta-barrel domain in the interval 155 to 614 (HPGTEISAGW…EYTLSGSYTF (460 aa)). A run of 3 beta stranded transmembrane segments spans residues 158 to 165 (TEISAGWG), 169 to 178 (YQNYDVSTQQ), and 184 to 195 (TRVTLLGDYAHT). 4 residues coordinate Ca(2+): Asp199, Gln211, Asp213, and Asp215. The next 2 membrane-spanning stretches (beta stranded) occupy residues 217 to 227 (FLSKTLYGALE) and 232 to 248 (DVWS…NRTN). Ca(2+) contacts are provided by Tyr249 and Asp250. Ala251 lines the cyanocob(III)alamin pocket. Ca(2+) is bound at residue Asp261. Beta stranded transmembrane passes span 263-277 (RKLY…LRYN), 279-296 (ELIK…KDYN), 309-325 (TLDE…NNII), 328-337 (HGNIGAGVDW), 353-369 (YDQR…QQVG), 371-381 (FTFEGAGRSDD), 385-400 (FGRH…WEFI), 403-417 (YRFI…KAPN), 434-443 (KSKQWEGAFE), 449-458 (VNWRISGYRN), 473-490 (YYNE…TANF), 494-509 (PLTH…ARNA), 517-529 (RRAK…QLDW), and 535-550 (DWGI…YDKD). Thr309 contributes to the cyanocob(III)alamin binding site. Arg517 contributes to the cyanocob(III)alamin binding site. Tyr551 serves as a coordination point for cyanocob(III)alamin. 3 beta stranded membrane passes run 558 to 572 (TVKM…LAVA), 585 to 596 (IANLFDKDYETV), and 602 to 614 (AGRE…SYTF). Residues 597–614 (YGYQTAGREYTLSGSYTF) carry the TonB C-terminal box motif.

It belongs to the TonB-dependent receptor family. BtuB (TC 1.B.14.3.1) subfamily.

It is found in the cell outer membrane. Its function is as follows. Involved in the active translocation of vitamin B12 (cyanocobalamin) across the outer membrane to the periplasmic space. It derives its energy for transport by interacting with the trans-periplasmic membrane protein TonB. This chain is Vitamin B12 transporter BtuB, found in Escherichia coli O6:K15:H31 (strain 536 / UPEC).